Here is a 1448-residue protein sequence, read N- to C-terminus: Protein clueless (1448 aa).

Disordered stretches follow at residues 1–96 (MALE…HAEK), 110–129 (NANVEKPQEGGAPDAEADGD), and 265–286 (RTRPDSVDCTPPEYVTPGVSDP). Low complexity-rich tracts occupy residues 9–26 (NSNATATGDATATATKAS) and 41–66 (NLNPNSNQQNSNQNLVNGNGTAADGP). The span at 68–77 (AKKKGKKNRN) shows a compositional bias: basic residues. A compositionally biased stretch (polar residues) spans 78-88 (KSPTEPTTEAV). S270 is modified (phosphoserine). The Clu domain maps to 424–666 (RAEDAFSSKL…RTFPPDVNFL (243 aa)). Disordered stretches follow at residues 726 to 773 (SEKS…SGEA), 958 to 1010 (AVSS…SASD), and 1414 to 1448 (GEAEDAVSKDIKEQPEAGKQLTNGDKAAATEATSS). Positions 748 to 769 (GAEKPDDKEKKNEEEEKKERST) are enriched in basic and acidic residues. Residues 966-981 (KKRGNGGKHNKHKSSK) show a composition bias toward basic residues. Positions 986 to 1007 (QQQQQTTGNQNGSSSGSSNSSS) are enriched in low complexity. A compositionally biased stretch (basic and acidic residues) spans 1419–1429 (AVSKDIKEQPE).

It belongs to the CLU family.

Its subcellular location is the cytoplasm. Functionally, mRNA-binding protein involved in proper cytoplasmic distribution of mitochondria. This Drosophila melanogaster (Fruit fly) protein is Protein clueless.